The primary structure comprises 303 residues: Ubiquinone biosynthesis protein COQ4, mitochondrial (303 aa).

Zn(2+) is bound by residues His191, Asp192, His195, and Glu207.

This sequence belongs to the COQ4 family. Component of a multi-subunit COQ enzyme complex, composed of at least COQ3, COQ4, COQ5, COQ6, COQ7 and COQ9. Requires Zn(2+) as cofactor.

The protein localises to the mitochondrion inner membrane. The catalysed reaction is a 4-hydroxy-3-methoxy-5-(all-trans-polyprenyl)benzoate + H(+) = a 2-methoxy-6-(all-trans-polyprenyl)phenol + CO2. It participates in cofactor biosynthesis; ubiquinone biosynthesis. Lyase that catalyzes the C1-decarboxylation of 4-hydroxy-3-methoxy-5-(all-trans-polyprenyl)benzoic acid into 2-methoxy-6-(all-trans-polyprenyl)phenol during ubiquinone biosynthesis. This Komagataella phaffii (strain GS115 / ATCC 20864) (Yeast) protein is Ubiquinone biosynthesis protein COQ4, mitochondrial.